The following is a 308-amino-acid chain: Elongation factor Ts (308 aa).

The segment at Thr-80–Val-83 is involved in Mg(2+) ion dislocation from EF-Tu.

Belongs to the EF-Ts family.

Its subcellular location is the cytoplasm. Its function is as follows. Associates with the EF-Tu.GDP complex and induces the exchange of GDP to GTP. It remains bound to the aminoacyl-tRNA.EF-Tu.GTP complex up to the GTP hydrolysis stage on the ribosome. The chain is Elongation factor Ts from Parvibaculum lavamentivorans (strain DS-1 / DSM 13023 / NCIMB 13966).